Reading from the N-terminus, the 245-residue chain is MAETSNDPFLSYVLSSKQLTNLNRLRRKAVTKQLGSSDDNKVSEEFLRYQHTYQREAFEYLQTKHDAHKIMESQYEQYQSSSKTRRYSIDLDSVDAVDTESQTEYPNEEFIDRNEDSEAVMELRKRLLGKGQNKGLGYETTKSVDRQIEDQDTLQQDLIQDMSKLVGSLKQGAVAFQSALDEDKQVLGAAEIGIQVASQGLMDVSGKLRKYDKSKLSYLFYITVFIFMILGLVFTFIIIQLFPAL.

Over 1 to 218 (MAETSNDPFL…RKYDKSKLSY (218 aa)) the chain is Cytoplasmic. The helical; Anchor for type IV membrane protein transmembrane segment at 219–239 (LFYITVFIFMILGLVFTFIII) threads the bilayer. Residues 240 to 245 (QLFPAL) are Lumenal-facing.

This sequence belongs to the USE1 family. Component of a SNARE complex consisting of UFE1, USE1, SEC20 and SEC22 or YKT6.

It localises to the endoplasmic reticulum membrane. In terms of biological role, SNARE required for targeting and fusion of Golgi-derived retrograde transport vesicles with the ER. The chain is Protein transport protein USE1 (USE1) from Saccharomyces cerevisiae (strain ATCC 204508 / S288c) (Baker's yeast).